Consider the following 360-residue polypeptide: Peptide chain release factor 1 (360 aa).

N5-methylglutamine is present on Gln-235.

This sequence belongs to the prokaryotic/mitochondrial release factor family. Post-translationally, methylated by PrmC. Methylation increases the termination efficiency of RF1.

The protein localises to the cytoplasm. Functionally, peptide chain release factor 1 directs the termination of translation in response to the peptide chain termination codons UAG and UAA. This Burkholderia cenocepacia (strain ATCC BAA-245 / DSM 16553 / LMG 16656 / NCTC 13227 / J2315 / CF5610) (Burkholderia cepacia (strain J2315)) protein is Peptide chain release factor 1.